Reading from the N-terminus, the 35-residue chain is Coenzyme PQQ synthesis protein A (35 aa).

Positions 16–20 form a cross-link, pyrroloquinoline quinone (Glu-Tyr); that stretch reads EINMY.

This sequence belongs to the PqqA family.

The protein operates within cofactor biosynthesis; pyrroloquinoline quinone biosynthesis. Its function is as follows. Required for coenzyme pyrroloquinoline quinone (PQQ) biosynthesis. PQQ is probably formed by cross-linking a specific glutamate to a specific tyrosine residue and excising these residues from the peptide. The polypeptide is Coenzyme PQQ synthesis protein A (Roseobacter denitrificans (strain ATCC 33942 / OCh 114) (Erythrobacter sp. (strain OCh 114))).